The sequence spans 289 residues: Acetyl-coenzyme A carboxylase carboxyl transferase subunit beta (289 aa).

Residues 36–289 (MWLRCPHCHQ…LLKTGSVANE (254 aa)) enclose the CoA carboxyltransferase N-terminal domain. 4 residues coordinate Zn(2+): C40, C43, C58, and C61. The C4-type zinc-finger motif lies at 40–61 (CPHCHQLLFAKQLTQYAVCPNC).

This sequence belongs to the AccD/PCCB family. In terms of assembly, acetyl-CoA carboxylase is a heterohexamer composed of biotin carboxyl carrier protein (AccB), biotin carboxylase (AccC) and two subunits each of ACCase subunit alpha (AccA) and ACCase subunit beta (AccD). Requires Zn(2+) as cofactor.

The protein localises to the cytoplasm. It catalyses the reaction N(6)-carboxybiotinyl-L-lysyl-[protein] + acetyl-CoA = N(6)-biotinyl-L-lysyl-[protein] + malonyl-CoA. The protein operates within lipid metabolism; malonyl-CoA biosynthesis; malonyl-CoA from acetyl-CoA: step 1/1. Functionally, component of the acetyl coenzyme A carboxylase (ACC) complex. Biotin carboxylase (BC) catalyzes the carboxylation of biotin on its carrier protein (BCCP) and then the CO(2) group is transferred by the transcarboxylase to acetyl-CoA to form malonyl-CoA. This is Acetyl-coenzyme A carboxylase carboxyl transferase subunit beta from Limosilactobacillus reuteri subsp. reuteri (strain JCM 1112) (Lactobacillus reuteri).